The primary structure comprises 1210 residues: Disease resistance-like protein DSC2 (1210 aa).

In terms of domain architecture, TIR spans 59–223 (WTHQVFPSFR…KVAKDVSDVL (165 aa)). The active site involves E134. One can recognise an NB-ARC domain in the interval 241–511 (ITRINSLLCL…CLFNGCQVNH (271 aa)). 9 LRR repeats span residues 662-685 (AKFL…IQPL), 686-709 (KNLK…SNAT), 711-732 (LESL…IRGT), 756-780 (ATSL…LPGD), 783-804 (MRSL…PEIS), 805-828 (TNIQ…RLWS), 830-848 (LDKL…PPVP), 849-873 (DGIS…NLSQ), and 940-970 (LPEL…NLSQ).

The protein belongs to the disease resistance NB-LRR family. Interacts with DSC1.

The catalysed reaction is NAD(+) + H2O = ADP-D-ribose + nicotinamide + H(+). Its function is as follows. TIR-NB-LRR receptor-like protein involved in plant defense. Acts as a trigger of hypersensitive response (HR). Functions as a guard of CAMTA3, a negative regulator of immunity, during pathogen infection. This chain is Disease resistance-like protein DSC2, found in Arabidopsis thaliana (Mouse-ear cress).